We begin with the raw amino-acid sequence, 412 residues long: Phosphoglycerate kinase (412 aa).

Residues 24 to 26, Arg44, 67 to 70, Arg126, and Arg170 each bind substrate; these read DLN and HLGR. ATP is bound by residues Lys220, Gly308, Glu339, and 368 to 371; that span reads GGDS.

The protein belongs to the phosphoglycerate kinase family. Monomer.

Its subcellular location is the cytoplasm. It catalyses the reaction (2R)-3-phosphoglycerate + ATP = (2R)-3-phospho-glyceroyl phosphate + ADP. It functions in the pathway carbohydrate degradation; glycolysis; pyruvate from D-glyceraldehyde 3-phosphate: step 2/5. This is Phosphoglycerate kinase from Mycobacteroides abscessus (strain ATCC 19977 / DSM 44196 / CCUG 20993 / CIP 104536 / JCM 13569 / NCTC 13031 / TMC 1543 / L948) (Mycobacterium abscessus).